Reading from the N-terminus, the 280-residue chain is UPF0276 protein NMA0228 (280 aa).

Belongs to the UPF0276 family.

The protein is UPF0276 protein NMA0228 of Neisseria meningitidis serogroup A / serotype 4A (strain DSM 15465 / Z2491).